A 450-amino-acid chain; its full sequence is Phosphoglucosamine mutase (450 aa).

Ser104 (phosphoserine intermediate) is an active-site residue. Positions 104, 245, 247, and 249 each coordinate Mg(2+). At Ser104 the chain carries Phosphoserine.

The protein belongs to the phosphohexose mutase family. Mg(2+) serves as cofactor. Post-translationally, activated by phosphorylation.

The catalysed reaction is alpha-D-glucosamine 1-phosphate = D-glucosamine 6-phosphate. Catalyzes the conversion of glucosamine-6-phosphate to glucosamine-1-phosphate. The sequence is that of Phosphoglucosamine mutase from Phenylobacterium zucineum (strain HLK1).